Here is a 293-residue protein sequence, read N- to C-terminus: HTH-type transcriptional regulator HdfR (293 aa).

Positions methionine 1–threonine 58 constitute an HTH lysR-type domain. The segment at residues phenylalanine 18–arginine 37 is a DNA-binding region (H-T-H motif).

Belongs to the LysR transcriptional regulatory family.

Functionally, negatively regulates the transcription of the flagellar master operon flhDC by binding to the upstream region of the operon. The sequence is that of HTH-type transcriptional regulator HdfR from Yersinia pseudotuberculosis serotype O:1b (strain IP 31758).